The primary structure comprises 219 residues: MASEHQMPASKQQPASPNIAIFEQENFQGRCHELSGACPNLKDAGVDKVGSILVHSGPWVGYEQASCKGEQFVFEKGEYPRWDSWTNSRRSDSITSLRPIKVVRAPRQPLPTRQTKDSQEHKIVLYENPSFTGKKIEIIDDDVPSFHAHGYQEKVSSVRVQSGTWVGYQYPGYRGYQYLFEKGDYKDSSEFGAQHPQIQSVRRIRDMQWHQRGAYHPSN.

At Ala-2 the chain carries N-acetylalanine. Residues 2–16 (ASEHQMPASKQQPAS) are N-terminal arm. Beta/gamma crystallin 'Greek key' domains are found at residues 17 to 56 (PNIA…LVHS) and 57 to 101 (GPWV…RPIK). Residues 102 to 120 (VVRAPRQPLPTRQTKDSQE) are connecting peptide. Beta/gamma crystallin 'Greek key' domains lie at 121 to 162 (HKIV…RVQS) and 163 to 205 (GTWV…RRIR). The C-terminal arm stretch occupies residues 207–219 (MQWHQRGAYHPSN).

It belongs to the beta/gamma-crystallin family. In terms of assembly, homo/heterodimer, or complexes of higher-order. The structure of beta-crystallin oligomers seems to be stabilized through interactions between the N-terminal arms.

Its function is as follows. Crystallins are the dominant structural components of the vertebrate eye lens. This is Beta-crystallin B2 (CRYBB2) from Gallus gallus (Chicken).